Reading from the N-terminus, the 238-residue chain is uncharacterized protein (238 aa).

Disordered regions lie at residues 1-51 (MPCT…ASCA) and 214-238 (ITVEPAGGSAEPTSDPVALMNFPTA). The segment covering 16-31 (ATWRTARPAPRRCGSC) has biased composition (low complexity).

This is an uncharacterized protein from Streptomyces griseus.